Here is a 570-residue protein sequence, read N- to C-terminus: MDSRTVGILGGGQLGRMIVEAANRLNIKTLILDAPNSPAKQITNASDHVDGSFANKEDIEALAAKCDVMTVEIEHVDVNALKEVQKQFPKLEIYPTPETIGLIQDKYVQKQHLVKNRIPVVPSITVENSKESLIKTGSSLGYPFVLKSRTLAYDGRGNFVVKSEEDIEKGLEFLANRPLYAEKWASFKKELSVMIIRSLDGRVYSYPIVETIHKNNVCHLCYVPARVPDSVQHKAKLMAENAIKSFPGCGIFGVEMFLLDDDSIVLNEIAPRPHNSGHYTINACVVSQFEAHLRAILDLPMPKNFTSLSTNSTNAIMLNLLGDPETKDKELQICERALNTPGASVYLYGKESKPNRKVGHINIVCSSMKECDKRLQFIMGLKTDPIKHSVMEILNAEEVRKPLVGVIMGSDSDLPVMSAACKMLEQFEVPFEVTIVSAHRTPYRMNKYASEAVSRGIKVIIAGAGGAAHLPGMVAAMTPVPVIGVPVKGSTLDGVDSLHSIVQMPRGVPVATVAINNSTNAGILAVRMLGIHNYDYVKKMEEFLNKQEEEVLQKAAKLESIGYEKYLESK.

In terms of domain architecture, ATP-grasp spans 110–297; sequence KQHLVKNRIP…QFEAHLRAIL (188 aa). 137 to 192 contacts ATP; it reads GSSLGYPFVLKSRTLAYDGRGNFVVKSEEDIEKGLEFLANRPLYAEKWASFKKELS.

In the C-terminal section; belongs to the AIR carboxylase family. Class I subfamily.

It carries out the reaction 5-amino-1-(5-phospho-D-ribosyl)imidazole-4-carboxylate + H(+) = 5-amino-1-(5-phospho-beta-D-ribosyl)imidazole + CO2. It functions in the pathway purine metabolism; IMP biosynthesis via de novo pathway; 5-amino-1-(5-phospho-D-ribosyl)imidazole-4-carboxylate from 5-amino-1-(5-phospho-D-ribosyl)imidazole (carboxylase route): step 1/1. The sequence is that of Phosphoribosylaminoimidazole carboxylase (ADE2) from Candida glabrata (strain ATCC 2001 / BCRC 20586 / JCM 3761 / NBRC 0622 / NRRL Y-65 / CBS 138) (Yeast).